Consider the following 177-residue polypeptide: MDIRPARISDLTGMQNCNLHNLPENYQLKYYLYHAISWPMLSYVATDPKGRVVGYVLAKMEEEPKDGIPHGHITSVSVMRSYRHLGLAKRLMVQSQRAMVEVYGAKYMSLHVRKSNRAAIHLYRDTLQFDVQGIESKYYADGEDAYAMHKDFSTLKFDTPETNDELAKTVQSLALNN.

Positions 1–153 (MDIRPARISD…DAYAMHKDFS (153 aa)) constitute an N-acetyltransferase domain.

Belongs to the acetyltransferase family. ARD1 subfamily. In terms of assembly, component of the N-terminal acetyltransferase A (NatA) complex, which is composed of at least ard1 and nat1.

The protein resides in the cytoplasm. Its subcellular location is the nucleus. It catalyses the reaction N-terminal glycyl-[protein] + acetyl-CoA = N-terminal N(alpha)-acetylglycyl-[protein] + CoA + H(+). The catalysed reaction is N-terminal L-alanyl-[protein] + acetyl-CoA = N-terminal N(alpha)-acetyl-L-alanyl-[protein] + CoA + H(+). The enzyme catalyses N-terminal L-seryl-[protein] + acetyl-CoA = N-terminal N(alpha)-acetyl-L-seryl-[protein] + CoA + H(+). It carries out the reaction N-terminal L-valyl-[protein] + acetyl-CoA = N-terminal N(alpha)-acetyl-L-valyl-[protein] + CoA + H(+). It catalyses the reaction N-terminal L-cysteinyl-[protein] + acetyl-CoA = N-terminal N(alpha)-acetyl-L-cysteinyl-[protein] + CoA + H(+). The catalysed reaction is N-terminal L-threonyl-[protein] + acetyl-CoA = N-terminal N(alpha)-acetyl-L-threonyl-[protein] + CoA + H(+). In terms of biological role, catalytic component of the NatA N-terminal acetyltransferase, which catalyzes acetylation of proteins beginning with Met-Ser, Met-Gly and Met-Ala. N-acetylation plays a role in normal eukaryotic translation and processing, protect against proteolytic degradation and protein turnover. The sequence is that of N-terminal acetyltransferase A complex catalytic subunit ard1 (ard1) from Schizosaccharomyces pombe (strain 972 / ATCC 24843) (Fission yeast).